The primary structure comprises 612 residues: UvrABC system protein C (612 aa).

The GIY-YIG domain occupies 18–96; it reads TRPGVYRMMD…IKTLKPPYNI (79 aa). The 36-residue stretch at 208 to 243 folds into the UVR domain; the sequence is PEIINETIQQMEVASAQLDFERAAVLRDQVDYLRRV.

Belongs to the UvrC family. As to quaternary structure, interacts with UvrB in an incision complex.

It is found in the cytoplasm. Functionally, the UvrABC repair system catalyzes the recognition and processing of DNA lesions. UvrC both incises the 5' and 3' sides of the lesion. The N-terminal half is responsible for the 3' incision and the C-terminal half is responsible for the 5' incision. The sequence is that of UvrABC system protein C from Hahella chejuensis (strain KCTC 2396).